The chain runs to 221 residues: Peptide methionine sulfoxide reductase MsrA (221 aa).

Residue cysteine 54 is part of the active site.

It belongs to the MsrA Met sulfoxide reductase family.

It catalyses the reaction L-methionyl-[protein] + [thioredoxin]-disulfide + H2O = L-methionyl-(S)-S-oxide-[protein] + [thioredoxin]-dithiol. The enzyme catalyses [thioredoxin]-disulfide + L-methionine + H2O = L-methionine (S)-S-oxide + [thioredoxin]-dithiol. Functionally, has an important function as a repair enzyme for proteins that have been inactivated by oxidation. Catalyzes the reversible oxidation-reduction of methionine sulfoxide in proteins to methionine. The polypeptide is Peptide methionine sulfoxide reductase MsrA (Methylobacterium sp. (strain 4-46)).